Here is a 784-residue protein sequence, read N- to C-terminus: Cation/H(+) antiporter 26 (784 aa).

The next 11 membrane-spanning stretches (helical) occupy residues 38-58 (PLLLLLISLVSSLSSVFQALL), 61-81 (LANVDFVTQILAGIFLGPSAL), 97-117 (YFIIESFEAISFMFISYISTA), 130-150 (LAIINGLSLFLFPYVVGAIAC), 201-221 (LALSSIMVANCFGWGFFLLLI), 240-260 (FTKVLLLVGIVVVCRPIFNWI), 286-306 (TFLSETVGFPYVVGSVALGLV), 321-341 (IGSFCYAVLMPCYVIGIGNKV), 351-371 (IISLEFLIFTISAAKFASIVL), 376-396 (FQVPISHAVIVGFIVCIQGIY), and 413-433 (EAFGIMVISAMVHSTIFTAIV).

The protein belongs to the monovalent cation:proton antiporter 2 (CPA2) transporter (TC 2.A.37) family. CHX (TC 2.A.37.4) subfamily. In terms of tissue distribution, expressed in pollen.

Its subcellular location is the membrane. May operate as a cation/H(+) antiporter. This Arabidopsis thaliana (Mouse-ear cress) protein is Cation/H(+) antiporter 26 (CHX26).